The chain runs to 165 residues: Transcription factor E (165 aa).

Positions 5 to 87 (NDPVVRGYLL…LWQLDLSDIE (83 aa)) constitute an HTH TFE/IIEalpha-type domain.

Belongs to the TFE family. As to quaternary structure, monomer. Interaction with RNA polymerase subunits RpoF and RpoE is necessary for Tfe stimulatory transcription activity. Able to interact with Tbp and RNA polymerase in the absence of DNA promoter. Interacts both with the preinitiation and elongation complexes.

In terms of biological role, transcription factor that plays a role in the activation of archaeal genes transcribed by RNA polymerase. Facilitates transcription initiation by enhancing TATA-box recognition by TATA-box-binding protein (Tbp), and transcription factor B (Tfb) and RNA polymerase recruitment. Not absolutely required for transcription in vitro, but particularly important in cases where Tbp or Tfb function is not optimal. It dynamically alters the nucleic acid-binding properties of RNA polymerases by stabilizing the initiation complex and destabilizing elongation complexes. Seems to translocate with the RNA polymerase following initiation and acts by binding to the non template strand of the transcription bubble in elongation complexes. The polypeptide is Transcription factor E (Methanococcoides burtonii (strain DSM 6242 / NBRC 107633 / OCM 468 / ACE-M)).